Consider the following 119-residue polypeptide: Thrombin-like enzyme TLBan (119 aa).

The 112-residue stretch at 1–112 (VIGGDECNIN…YLLWIQSIIA (112 aa)) folds into the Peptidase S1 domain. Residues His40 and Asp59 each act as charge relay system in the active site. Cysteines 54 and 118 form a disulfide.

Monomer. Contains both N-linked carbohydrates and sialic acid. Expressed by the venom gland.

The protein resides in the secreted. Its activity is regulated as follows. Strongly inhibited by PMSF and slightly inhibited by EDTA and soybean trypsin inhibitor. In terms of biological role, thrombin-like snake venom serine protease, with high clotting activity in vitro. Also has fibrinogenolytic ability, showing a fast degradation of fibrinogen Aalpha chain (FGA), a slow degradation of Bbeta chain (FGB) and no degradation of gamma chain. Also causes platelet aggregation in platelet rich plasma (PRP) and washed platelet suspension. The polypeptide is Thrombin-like enzyme TLBan (Bothrocophias andianus (Andean lancehead)).